Consider the following 211-residue polypeptide: Imidazole glycerol phosphate synthase subunit HisH (211 aa).

Positions Met1–Val206 constitute a Glutamine amidotransferase type-1 domain. Cys79 functions as the Nucleophile in the catalytic mechanism. Residues His181 and Glu183 contribute to the active site.

In terms of assembly, heterodimer of HisH and HisF.

The protein resides in the cytoplasm. The catalysed reaction is 5-[(5-phospho-1-deoxy-D-ribulos-1-ylimino)methylamino]-1-(5-phospho-beta-D-ribosyl)imidazole-4-carboxamide + L-glutamine = D-erythro-1-(imidazol-4-yl)glycerol 3-phosphate + 5-amino-1-(5-phospho-beta-D-ribosyl)imidazole-4-carboxamide + L-glutamate + H(+). It carries out the reaction L-glutamine + H2O = L-glutamate + NH4(+). The protein operates within amino-acid biosynthesis; L-histidine biosynthesis; L-histidine from 5-phospho-alpha-D-ribose 1-diphosphate: step 5/9. IGPS catalyzes the conversion of PRFAR and glutamine to IGP, AICAR and glutamate. The HisH subunit catalyzes the hydrolysis of glutamine to glutamate and ammonia as part of the synthesis of IGP and AICAR. The resulting ammonia molecule is channeled to the active site of HisF. This is Imidazole glycerol phosphate synthase subunit HisH from Desulfitobacterium hafniense (strain DSM 10664 / DCB-2).